A 436-amino-acid polypeptide reads, in one-letter code: Histidinol dehydrogenase (436 aa).

3 residues coordinate NAD(+): Tyr130, Gln191, and Asn214. Ser237, Gln259, and His262 together coordinate substrate. 2 residues coordinate Zn(2+): Gln259 and His262. Catalysis depends on proton acceptor residues Glu327 and His328. The substrate site is built by His328, Asp361, Glu415, and His420. Asp361 lines the Zn(2+) pocket. His420 serves as a coordination point for Zn(2+).

The protein belongs to the histidinol dehydrogenase family. Requires Zn(2+) as cofactor.

It carries out the reaction L-histidinol + 2 NAD(+) + H2O = L-histidine + 2 NADH + 3 H(+). The protein operates within amino-acid biosynthesis; L-histidine biosynthesis; L-histidine from 5-phospho-alpha-D-ribose 1-diphosphate: step 9/9. Its function is as follows. Catalyzes the sequential NAD-dependent oxidations of L-histidinol to L-histidinaldehyde and then to L-histidine. This Geobacter metallireducens (strain ATCC 53774 / DSM 7210 / GS-15) protein is Histidinol dehydrogenase.